We begin with the raw amino-acid sequence, 483 residues long: Phosphomethylpyrimidine synthase (483 aa).

Substrate contacts are provided by residues N97, M126, Y156, H192, 212–214, 253–256, and E292; these read SRG and DSLR. H296 contacts Zn(2+). Residue Y319 coordinates substrate. H360 is a Zn(2+) binding site. [4Fe-4S] cluster is bound by residues C440, C443, and C448.

It belongs to the ThiC family. It depends on [4Fe-4S] cluster as a cofactor.

It catalyses the reaction 5-amino-1-(5-phospho-beta-D-ribosyl)imidazole + S-adenosyl-L-methionine = 4-amino-2-methyl-5-(phosphooxymethyl)pyrimidine + CO + 5'-deoxyadenosine + formate + L-methionine + 3 H(+). Its pathway is cofactor biosynthesis; thiamine diphosphate biosynthesis. Its function is as follows. Catalyzes the synthesis of the hydroxymethylpyrimidine phosphate (HMP-P) moiety of thiamine from aminoimidazole ribotide (AIR) in a radical S-adenosyl-L-methionine (SAM)-dependent reaction. The chain is Phosphomethylpyrimidine synthase from Parasynechococcus marenigrum (strain WH8102).